Reading from the N-terminus, the 523-residue chain is Peptide chain release factor 3 (523 aa).

One can recognise a tr-type G domain in the interval 8–275 (KKRRTFAIIS…TFLEYAPEPH (268 aa)). GTP is bound by residues 17–24 (SHPDAGKT), 85–89 (DTPGH), and 139–142 (NKLD).

Belongs to the TRAFAC class translation factor GTPase superfamily. Classic translation factor GTPase family. PrfC subfamily.

It is found in the cytoplasm. In terms of biological role, increases the formation of ribosomal termination complexes and stimulates activities of RF-1 and RF-2. It binds guanine nucleotides and has strong preference for UGA stop codons. It may interact directly with the ribosome. The stimulation of RF-1 and RF-2 is significantly reduced by GTP and GDP, but not by GMP. In Lactococcus lactis subsp. cremoris (strain SK11), this protein is Peptide chain release factor 3.